We begin with the raw amino-acid sequence, 269 residues long: Centromere protein K (269 aa).

Positions 1–10 (MNQEDLDPDS) are enriched in acidic residues. Residues 1 to 20 (MNQEDLDPDSTTDVGDVTNT) form a disordered region. 2 coiled-coil regions span residues 22–42 (EELI…QNKL) and 98–151 (QKLR…NKVE).

The protein belongs to the CENP-K/MCM22 family. As to quaternary structure, component of the CENPA-CAD complex, composed of CENPI, CENPK, CENPL, CENPO, CENPP, CENPQ, CENPR and CENPS. The CENPA-CAD complex interacts with the CENPA-NAC complex, at least composed of CENPA, CENPC, CENPH, CENPM, CENPN, CENPT and CENPU. Interacts directly with CENPH. In terms of tissue distribution, detected in several fetal organs with highest levels in fetal liver. In adults, it is weakly expressed in lung and placenta.

Its subcellular location is the nucleus. It localises to the chromosome. The protein localises to the centromere. The protein resides in the kinetochore. Its function is as follows. Component of the CENPA-CAD (nucleosome distal) complex, a complex recruited to centromeres which is involved in assembly of kinetochore proteins, mitotic progression and chromosome segregation. May be involved in incorporation of newly synthesized CENPA into centromeres via its interaction with the CENPA-NAC complex. Acts in coordination with KNL1 to recruit the NDC80 complex to the outer kinetochore. This chain is Centromere protein K (CENPK), found in Homo sapiens (Human).